The chain runs to 89 residues: Small ribosomal subunit protein uS15 (89 aa).

Belongs to the universal ribosomal protein uS15 family. As to quaternary structure, part of the 30S ribosomal subunit. Forms a bridge to the 50S subunit in the 70S ribosome, contacting the 23S rRNA.

One of the primary rRNA binding proteins, it binds directly to 16S rRNA where it helps nucleate assembly of the platform of the 30S subunit by binding and bridging several RNA helices of the 16S rRNA. Its function is as follows. Forms an intersubunit bridge (bridge B4) with the 23S rRNA of the 50S subunit in the ribosome. The chain is Small ribosomal subunit protein uS15 from Streptococcus gordonii (strain Challis / ATCC 35105 / BCRC 15272 / CH1 / DL1 / V288).